The sequence spans 92 residues: Dynein light chain 1, cytoplasmic (92 aa).

The protein belongs to the dynein light chain family. Homodimer. Cytoplasmic dynein consists of two catalytic heavy chains (HCs) and a number of non-catalytic subunits which present intermediate chains (ICs), light intermediate chains (LICs) and light chains (LCs). Component of the nuclear pore complex (NPC). NPC constitutes the exclusive means of nucleocytoplasmic transport. NPCs allow the passive diffusion of ions and small molecules and the active, nuclear transport receptor-mediated bidirectional transport of macromolecules such as proteins, RNAs, ribonucleoparticles (RNPs), and ribosomal subunits across the nuclear envelope. Due to its 8-fold rotational symmetry, all subunits are present with 8 copies or multiples thereof. Part of the NUP82 subcomplex. In the complex, interacts directly with Nup159.

It localises to the cytoplasm. The protein resides in the cytoskeleton. It is found in the nucleus. Its subcellular location is the nuclear pore complex. Its function is as follows. Acts as one of several non-catalytic accessory components of the cytoplasmic dynein complex that are thought to be involved in linking dynein to cargos and to adapter proteins that regulate dynein function. Cytoplasmic dynein 1 acts as a motor for the intracellular retrograde motility of vesicles and organelles along microtubules. May play a role in changing or maintaining the spatial distribution of cytoskeletal structures. Also a component of the nuclear pore complex where it may contribute to the stable association of the Nup82 subcomplex with the NPC. The polypeptide is Dynein light chain 1, cytoplasmic (DYN2) (Saccharomyces cerevisiae (strain ATCC 204508 / S288c) (Baker's yeast)).